The primary structure comprises 364 residues: Chorismate synthase (364 aa).

Residues arginine 48 and arginine 54 each coordinate NADP(+). Residues 125 to 127, 238 to 239, glycine 278, 293 to 297, and arginine 319 each bind FMN; these read RSS, NA, and KPTSS.

This sequence belongs to the chorismate synthase family. In terms of assembly, homotetramer. It depends on FMNH2 as a cofactor.

It carries out the reaction 5-O-(1-carboxyvinyl)-3-phosphoshikimate = chorismate + phosphate. It participates in metabolic intermediate biosynthesis; chorismate biosynthesis; chorismate from D-erythrose 4-phosphate and phosphoenolpyruvate: step 7/7. Functionally, catalyzes the anti-1,4-elimination of the C-3 phosphate and the C-6 proR hydrogen from 5-enolpyruvylshikimate-3-phosphate (EPSP) to yield chorismate, which is the branch point compound that serves as the starting substrate for the three terminal pathways of aromatic amino acid biosynthesis. This reaction introduces a second double bond into the aromatic ring system. The polypeptide is Chorismate synthase (Shewanella frigidimarina (strain NCIMB 400)).